The following is a 160-amino-acid chain: Cytochrome c-type biogenesis protein CcmE (160 aa).

Residues 1-7 (MTRKQRR) lie on the Cytoplasmic side of the membrane. A helical; Signal-anchor for type II membrane protein membrane pass occupies residues 8–28 (LFMIFGALGTLGVAVGLILFA). Topologically, residues 29-160 (LSDNIVFFYG…TQGAAAPLIR (132 aa)) are periplasmic. Residues His-122 and Tyr-126 each coordinate heme. Residues 140–160 (VWQEDGQAKPATQGAAAPLIR) form a disordered region.

The protein belongs to the CcmE/CycJ family.

It is found in the cell inner membrane. Heme chaperone required for the biogenesis of c-type cytochromes. Transiently binds heme delivered by CcmC and transfers the heme to apo-cytochromes in a process facilitated by CcmF and CcmH. This chain is Cytochrome c-type biogenesis protein CcmE, found in Beijerinckia indica subsp. indica (strain ATCC 9039 / DSM 1715 / NCIMB 8712).